Here is a 502-residue protein sequence, read N- to C-terminus: 1-aminocyclopropane-1-carboxylate synthase-like protein 1 (502 aa).

The disordered stretch occupies residues 15–35 (CPGSDSIQDLPSNKGDGLERE). Glu106 contributes to the substrate binding site. Lys324 bears the N6-(pyridoxal phosphate)lysine mark.

This sequence belongs to the class-I pyridoxal-phosphate-dependent aminotransferase family.

Functionally, does not catalyze the synthesis of 1-aminocyclopropane-1-carboxylate but is capable of catalyzing the deamination of L-vinylglycine. The polypeptide is 1-aminocyclopropane-1-carboxylate synthase-like protein 1 (ACCS) (Bos taurus (Bovine)).